The sequence spans 339 residues: Ectoine/5-hydroxyectoine-binding periplasmic protein UehA (339 aa).

The signal sequence occupies residues 1–20 (MAQSITFTFGAVAAAGIALA). 5 residues coordinate L-ectoine: Glu-36, Arg-171, Asn-211, Phe-215, and Phe-236. The cysteines at positions 162 and 303 are disulfide-linked.

This sequence belongs to the bacterial solute-binding protein 7 family. Monomer. The complex comprises the extracytoplasmic solute receptor protein UehA, and the two transmembrane proteins UehB and UehC.

It localises to the periplasm. Functionally, part of the tripartite ATP-independent periplasmic (TRAP) transport system UehABC, which imports both ectoine and 5-hydroxyectoine as nutrients, and not as osmoprotectants. UehA binds both ectoine and 5-hydroxyectoine with high specificity and affinity. This is Ectoine/5-hydroxyectoine-binding periplasmic protein UehA from Ruegeria pomeroyi (strain ATCC 700808 / DSM 15171 / DSS-3) (Silicibacter pomeroyi).